The sequence spans 546 residues: Protein phosphatase 1G (546 aa).

Gly2 carries N-myristoyl glycine lipidation. Residue Arg22 is modified to Omega-N-methylarginine. One can recognise a PPM-type phosphatase domain in the interval 26 to 505 (PYGFSAMQGW…DNMTCIIICF (480 aa)). Mn(2+) contacts are provided by Asp60 and Gly61. Disordered regions lie at residues 116–139 (QIAGRPTEDEDEKEKVADEDDVDN) and 161–328 (GQNC…SDSG). Residue Thr122 is modified to Phosphothreonine. Positions 123–139 (EDEDEKEKVADEDDVDN) are enriched in acidic residues. Ser183 carries the phosphoserine modification. Over residues 259-312 (DSEDESDEAEEEEEDSEECSEEEDGYSSEEAENEEDEDDTEEAEEDDEEEEEEM) the composition is skewed to acidic residues. N6-acetyllysine is present on Lys383. Residues Asp441 and Asp496 each coordinate Mn(2+). The segment at 512–546 (ELQPESGKRKLEEVLSTEGAEENGNSDKKKKAKRD) is disordered. Ser527 is subject to Phosphoserine.

It belongs to the PP2C family. As to quaternary structure, interacts with NOL3; may dephosphorylate NOL3. Mg(2+) serves as cofactor. It depends on Mn(2+) as a cofactor. As to expression, widely expressed. Most abundant in testis, skeletal muscle, and heart.

It is found in the cytoplasm. The protein localises to the membrane. The catalysed reaction is O-phospho-L-seryl-[protein] + H2O = L-seryl-[protein] + phosphate. The enzyme catalyses O-phospho-L-threonyl-[protein] + H2O = L-threonyl-[protein] + phosphate. The chain is Protein phosphatase 1G (PPM1G) from Homo sapiens (Human).